Here is a 190-residue protein sequence, read N- to C-terminus: Elongation factor P 2 (190 aa).

Belongs to the elongation factor P family.

The protein localises to the cytoplasm. It participates in protein biosynthesis; polypeptide chain elongation. Its function is as follows. Involved in peptide bond synthesis. Stimulates efficient translation and peptide-bond synthesis on native or reconstituted 70S ribosomes in vitro. Probably functions indirectly by altering the affinity of the ribosome for aminoacyl-tRNA, thus increasing their reactivity as acceptors for peptidyl transferase. This is Elongation factor P 2 (efp2) from Chlamydia pneumoniae (Chlamydophila pneumoniae).